Here is a 401-residue protein sequence, read N- to C-terminus: S-adenosylmethionine synthase 1 (401 aa).

Residue histidine 15 participates in ATP binding. Position 17 (aspartate 17) interacts with Mg(2+). Glutamate 43 provides a ligand contact to K(+). The L-methionine site is built by glutamate 56 and glutamine 98. Positions 98-108 (QSPDIAQGVDK) are flexible loop. ATP contacts are provided by residues 173–175 (DGK), 246–247 (RF), aspartate 255, 261–262 (RK), alanine 278, and lysine 282. Aspartate 255 is an L-methionine binding site. Lysine 286 lines the L-methionine pocket.

Belongs to the AdoMet synthase family. Homotetramer; dimer of dimers. Requires Mg(2+) as cofactor. K(+) serves as cofactor.

The protein localises to the cytoplasm. The catalysed reaction is L-methionine + ATP + H2O = S-adenosyl-L-methionine + phosphate + diphosphate. It functions in the pathway amino-acid biosynthesis; S-adenosyl-L-methionine biosynthesis; S-adenosyl-L-methionine from L-methionine: step 1/1. In terms of biological role, catalyzes the formation of S-adenosylmethionine (AdoMet) from methionine and ATP. The overall synthetic reaction is composed of two sequential steps, AdoMet formation and the subsequent tripolyphosphate hydrolysis which occurs prior to release of AdoMet from the enzyme. This chain is S-adenosylmethionine synthase 1, found in Frankia casuarinae (strain DSM 45818 / CECT 9043 / HFP020203 / CcI3).